A 377-amino-acid chain; its full sequence is Peptide chain release factor 2 (377 aa).

N5-methylglutamine is present on Q257.

Belongs to the prokaryotic/mitochondrial release factor family. In terms of processing, methylated by PrmC. Methylation increases the termination efficiency of RF2.

Its subcellular location is the cytoplasm. Peptide chain release factor 2 directs the termination of translation in response to the peptide chain termination codons UGA and UAA. The polypeptide is Peptide chain release factor 2 (Lactiplantibacillus plantarum (strain ATCC BAA-793 / NCIMB 8826 / WCFS1) (Lactobacillus plantarum)).